We begin with the raw amino-acid sequence, 1242 residues long: Myosin-16 (1242 aa).

In terms of domain architecture, Myosin N-terminal SH3-like spans 6-55; the sequence is MVDSHVWVEDPERAWIDGVVLNIKGEEAEIKTNDGRDVIANLSRLYPKDT. The Myosin motor domain occupies 60 to 729; it reads EGVEDMTRLS…QMAELDAHRT (670 aa). ATP contacts are provided by residues 154–161 and 207–215; these read GESGSGKT and NNNSSRFGK. Actin-binding stretches follow at residues 493–527, 529–552, 587–610, and 610–632; these read LIEK…YHTF, DHKR…AGDV, FPPL…KLQL, and LQQL…KPNN. IQ domains follow at residues 732–761, 755–784, 780–809, 803–832, 828–857, and 851–880; these read LGES…ASVN, MRRA…EEAA, REEA…SALT, TKSS…TRAA, TTRA…VSLL, and LKRV…ADRK. Disordered regions lie at residues 869 to 893 and 908 to 1042; these read KQLG…ELSN and EQSD…ERKT. Residues 876 to 893 show a composition bias toward basic and acidic residues; it reads QADRKEETEKERKVELSN. Tandem repeats lie at residues 876-908, 909-940, 941-965, 966-997, 998-1029, and 1030-1061. The tract at residues 876-1061 is 6 X 33 AA repeats of Q-S-D-D-x-E-E-x(2)-H-x-R-K-x-K-x(2)-I-x(2)-E-D-G-x(3)-S-x-V-x-H-S-x; that stretch reads QADRKEETEK…IQKSFVTCSE (186 aa). The segment covering 948–966 has biased composition (basic and acidic residues); sequence GHERKTKLSIESEDGHSDQ. Positions 1079-1142 form a coiled coil; it reads DTEIESLTAE…QLQDSLNRLL (64 aa). The interval 1175–1242 is disordered; that stretch reads DLADSSENSE…DKEGGFEDYF (68 aa). A compositionally biased stretch (low complexity) spans 1179–1191; the sequence is SSENSEASSSDSD. Residues 1199-1224 show a composition bias toward polar residues; the sequence is PSSDNFSTFNPNQLQVIVQDLSTTEA. The span at 1225 to 1242 shows a compositional bias: basic and acidic residues; that stretch reads KGTESYDSDKEGGFEDYF.

It belongs to the TRAFAC class myosin-kinesin ATPase superfamily. Myosin family. Plant myosin class XI subfamily. In terms of assembly, homodimer. In terms of tissue distribution, expressed in flowers and leaves.

The protein localises to the cytoplasm. Myosin heavy chain that is required for the cell cycle-regulated transport of various organelles and proteins for their segregation. Functions by binding with its tail domain to receptor proteins on organelles and exerting force with its N-terminal motor domain against actin filaments, thereby transporting its cargo along polarized actin cables. The chain is Myosin-16 (XI-J) from Arabidopsis thaliana (Mouse-ear cress).